A 297-amino-acid chain; its full sequence is Putative phosphate permease MJ0630 (297 aa).

Transmembrane regions (helical) follow at residues I2–L22, L45–S65, V67–L87, T99–G119, I121–S141, I154–S174, V180–L200, F225–V245, and N274–N294.

This sequence belongs to the inorganic phosphate transporter (PiT) (TC 2.A.20) family.

It is found in the cell membrane. In terms of biological role, potential transporter for phosphate. This chain is Putative phosphate permease MJ0630, found in Methanocaldococcus jannaschii (strain ATCC 43067 / DSM 2661 / JAL-1 / JCM 10045 / NBRC 100440) (Methanococcus jannaschii).